A 27-amino-acid chain; its full sequence is Flagellar filament 34 kDa core protein (27 aa).

Belongs to the bacterial flagellin family. In terms of assembly, the flagellum consists of an outer layer composed of repeating units of FlaA around a core that contains one or all of five antigenically related polypeptides.

It is found in the periplasmic flagellum. Its subcellular location is the periplasm. Component of the core of the flagella. In Spirochaeta aurantia, this protein is Flagellar filament 34 kDa core protein.